The sequence spans 54 residues: Ferredoxin (54 aa).

4Fe-4S ferredoxin-type domains follow at residues 2 to 25 and 26 to 54; these read YVIN…IQQG and SIYA…NPED. Positions 8, 11, 14, 18, 35, 38, 41, and 45 each coordinate [4Fe-4S] cluster.

The cofactor is [4Fe-4S] cluster.

In terms of biological role, ferredoxins are iron-sulfur proteins that transfer electrons in a wide variety of metabolic reactions. The chain is Ferredoxin from Peptoniphilus asaccharolyticus (Peptostreptococcus asaccharolyticus).